The following is a 713-amino-acid chain: MARRADSFCLISCVLVSFVISVSAVTDDSQDKQVYVVYMGSLPSSRLEYTPMSHHMSILQEVTGESSVEGRLVRSYKRSFNGFAARLTESERERVAEMEGVVSVFPDINYKLQTTASWDFLGLKEGKNTKRNLAIESDTIIGFIDSGIWPESESFSDKGFGPPPKKWKGVCSAGKNFTCNNKLIGARDYTNEGTRDIEGHGTHTASTAAGNAVKNTSFYGIGNGTARGGVPASRIAAYKACSEMGCTTESVLSAFDDAIADGVDLISISLGANLVRTYETDPIAIGAFHAMVKGILTVQSAGNGGPNPGSVMSVAPWILTVAASNTNRGFVTKVVLGNGKTFVGKSLNAFDLKGKNYPLYGGSTDGPLLRGKILVSEDKVSSEIVVANINENYHDYAYVSILPSSALSKDDFDSVISYVNSTKSPHGTVLKSEAIFNQAAPKVAGFSSRGPNTIAVDILKPDVTAPGVEILAAFSPLNSPAQDKRDNRHVKYSVLSGTSMSCPHVAGVAAYIKTFHPEWSPSMIQSAIMTTAWPMNATGTAVASTEFAYGAGHVDPIAAINPGLVYEIGKSDHIAFLCGLNYNATSLKLIAGEAVTCTGKTLPRNLNYPSMSAKLPKSESSFIVTFNRTVTNVGTPNSTYKSKIVLNHGSNLKVEVSPSVLSMKSVKEKQSFTVTVSGSNIDPKLPSSANLIWSDGTHNVRSPIVVYTYSVSD.

An N-terminal signal peptide occupies residues 1–24; sequence MARRADSFCLISCVLVSFVISVSA. The propeptide at 25–113 is activation peptide; the sequence is VTDDSQDKQV…VFPDINYKLQ (89 aa). Residues 34 to 112 enclose the Inhibitor I9 domain; sequence VYVVYMGSLP…SVFPDINYKL (79 aa). Positions 117-560 constitute a Peptidase S8 domain; it reads SWDFLGLKEG…AGHVDPIAAI (444 aa). Asp-145 serves as the catalytic Charge relay system. An N-linked (GlcNAc...) asparagine glycan is attached at Asn-176. Catalysis depends on His-200, which acts as the Charge relay system. N-linked (GlcNAc...) asparagine glycans are attached at residues Asn-215 and Asn-223. Residues 356–415 enclose the PA domain; that stretch reads NYPLYGGSTDGPLLRGKILVSEDKVSSEIVVANINENYHDYAYVSILPSSALSKDDFDSV. The N-linked (GlcNAc...) asparagine glycan is linked to Asn-420. The Charge relay system role is filled by Ser-499. Residues Asn-536, Asn-583, Asn-627, and Asn-637 are each glycosylated (N-linked (GlcNAc...) asparagine).

Belongs to the peptidase S8 family. The C-terminal propeptide is autocleaved.

It is found in the secreted. The protein is Subtilisin-like protease SBT4.9 of Arabidopsis thaliana (Mouse-ear cress).